The chain runs to 169 residues: Lipoprotein signal peptidase (169 aa).

2 consecutive transmembrane segments (helical) span residues 56–76 and 84–104; these read FLPP…VIIY and QPLF…NLID. Catalysis depends on residues Asp-113 and Asp-139. A helical membrane pass occupies residues 132–152; sequence WPIFNIADSAITIGACMLIIF.

It belongs to the peptidase A8 family.

It is found in the cell inner membrane. The catalysed reaction is Release of signal peptides from bacterial membrane prolipoproteins. Hydrolyzes -Xaa-Yaa-Zaa-|-(S,diacylglyceryl)Cys-, in which Xaa is hydrophobic (preferably Leu), and Yaa (Ala or Ser) and Zaa (Gly or Ala) have small, neutral side chains.. It functions in the pathway protein modification; lipoprotein biosynthesis (signal peptide cleavage). In terms of biological role, this protein specifically catalyzes the removal of signal peptides from prolipoproteins. The polypeptide is Lipoprotein signal peptidase (Chlorobium phaeovibrioides (strain DSM 265 / 1930) (Prosthecochloris vibrioformis (strain DSM 265))).